Reading from the N-terminus, the 667-residue chain is Probable potassium transport system protein Kup (667 aa).

The next 12 membrane-spanning stretches (helical) occupy residues 5–25 (GLLI…LYVM), 47–67 (ISLI…IIAL), 88–108 (AAWL…DGTL), 133–153 (VSNQ…LFSI), 164–184 (AFGP…LINI), 210–230 (AGFA…ALYS), 243–263 (SWPF…VWIL), 287–307 (LASI…LITG), 336–356 (IYIP…VLFF), 367–387 (GLSI…WLVL), 393–413 (LANL…MGSS), and 420–440 (GGYV…VWYF).

This sequence belongs to the HAK/KUP transporter (TC 2.A.72) family.

The protein resides in the cell membrane. The enzyme catalyses K(+)(in) + H(+)(in) = K(+)(out) + H(+)(out). Its function is as follows. Transport of potassium into the cell. Likely operates as a K(+):H(+) symporter. This is Probable potassium transport system protein Kup from Lactobacillus delbrueckii subsp. bulgaricus (strain ATCC 11842 / DSM 20081 / BCRC 10696 / JCM 1002 / NBRC 13953 / NCIMB 11778 / NCTC 12712 / WDCM 00102 / Lb 14).